Consider the following 129-residue polypeptide: Histone H2A-IV (129 aa).

Positions 1–22 (MSGRGKQGGKARAKAKSRSSRA) are disordered. An N-acetylserine modification is found at serine 2. The residue at position 2 (serine 2) is a Phosphoserine. Lysine 6 is subject to N6-(2-hydroxyisobutyryl)lysine. Lysine 6 and lysine 10 each carry N6-acetyllysine. A compositionally biased stretch (basic residues) spans 7–19 (QGGKARAKAKSRS). At lysine 10 the chain carries N6-(2-hydroxyisobutyryl)lysine; alternate. The residue at position 10 (lysine 10) is an N6-lactoyllysine; alternate. Lysine 10 carries the N6-succinyllysine modification. Glycyl lysine isopeptide (Lys-Gly) (interchain with G-Cter in ubiquitin) cross-links involve residues lysine 14 and lysine 16. Lysine 37 is modified (N6-(2-hydroxyisobutyryl)lysine; alternate). N6-(2-hydroxyisobutyryl)lysine is present on residues lysine 75 and lysine 76. Lysine 96 is subject to N6-(2-hydroxyisobutyryl)lysine; alternate. The residue at position 96 (lysine 96) is an N6-succinyllysine. The residue at position 96 (lysine 96) is an N6-glutaryllysine; alternate. Position 100 is an N6-glutaryllysine (lysine 100). Glutamine 105 carries the N5-methylglutamine modification. Lysine 119 carries the N6-(2-hydroxyisobutyryl)lysine; alternate modification. Lysine 119 and lysine 120 each carry N6-glutaryllysine; alternate. A Glycyl lysine isopeptide (Lys-Gly) (interchain with G-Cter in ubiquitin) cross-link involves residue lysine 120.

The protein belongs to the histone H2A family. In terms of assembly, the nucleosome is a histone octamer containing two molecules each of H2A, H2B, H3 and H4 assembled in one H3-H4 heterotetramer and two H2A-H2B heterodimers. The octamer wraps approximately 147 bp of DNA. In terms of processing, monoubiquitination of Lys-120 (H2AK119Ub) gives a specific tag for epigenetic transcriptional repression. Following DNA double-strand breaks (DSBs), it is ubiquitinated through 'Lys-63' linkage of ubiquitin moieties, leading to the recruitment of repair proteins to sites of DNA damage. H2AK119Ub and ionizing radiation-induced 'Lys-63'-linked ubiquitination are distinct events. Post-translationally, phosphorylation on Ser-2 is enhanced during mitosis. Phosphorylation on Ser-2 directly represses transcription. Glutamine methylation at Gln-105 (H2AQ104me) by FBL is specifically dedicated to polymerase I. It is present at 35S ribosomal DNA locus and impairs binding of the FACT complex.

It localises to the nucleus. Its subcellular location is the chromosome. Functionally, core component of nucleosome. Nucleosomes wrap and compact DNA into chromatin, limiting DNA accessibility to the cellular machineries which require DNA as a template. Histones thereby play a central role in transcription regulation, DNA repair, DNA replication and chromosomal stability. DNA accessibility is regulated via a complex set of post-translational modifications of histones, also called histone code, and nucleosome remodeling. The chain is Histone H2A-IV from Gallus gallus (Chicken).